Reading from the N-terminus, the 163-residue chain is Photosystem II extrinsic protein V (163 aa).

An N-terminal signal peptide occupies residues Met1 to Ala26. Residues Cys63, Cys66, His67, and His118 each coordinate heme c.

Belongs to the cytochrome c family. PsbV subfamily. In terms of assembly, PSII is composed of 1 copy each of membrane proteins PsbA, PsbB, PsbC, PsbD, PsbE, PsbF, PsbH, PsbI, PsbJ, PsbK, PsbL, PsbM, PsbT, PsbX, PsbY, PsbZ, Psb30/Ycf12, peripheral proteins PsbO, CyanoQ (PsbQ), PsbU, PsbV and a large number of cofactors. It forms dimeric complexes. Requires heme c as cofactor.

It is found in the cellular thylakoid membrane. In terms of biological role, one of the extrinsic, lumenal subunits of photosystem II (PSII). PSII is a light-driven water plastoquinone oxidoreductase, using light energy to abstract electrons from H(2)O, generating a proton gradient subsequently used for ATP formation. The extrinsic proteins stabilize the structure of photosystem II oxygen-evolving complex (OEC), the ion environment of oxygen evolution and protect the OEC against heat-induced inactivation. Low-potential cytochrome c that plays a role in the OEC of PSII. The protein is Photosystem II extrinsic protein V of Aphanothece halophytica.